Here is a 335-residue protein sequence, read N- to C-terminus: Holliday junction branch migration complex subunit RuvB (335 aa).

Residues 1-181 are large ATPase domain (RuvB-L); the sequence is MDRIVEIEKY…FGMQFRLEFY (181 aa). ATP contacts are provided by residues leucine 20, arginine 21, glycine 62, lysine 65, threonine 66, threonine 67, 128-130, arginine 171, tyrosine 181, and arginine 218; that span reads EDY. A Mg(2+)-binding site is contributed by threonine 66. Residues 182–252 form a small ATPAse domain (RuvB-S) region; the sequence is KDSELALILQ…RANEALNSLG (71 aa). Residues 255–335 are head domain (RuvB-H); it reads ELGFDAMDLR…LNYEKTLFEE (81 aa). DNA-binding residues include arginine 309 and arginine 314.

It belongs to the RuvB family. As to quaternary structure, homohexamer. Forms an RuvA(8)-RuvB(12)-Holliday junction (HJ) complex. HJ DNA is sandwiched between 2 RuvA tetramers; dsDNA enters through RuvA and exits via RuvB. An RuvB hexamer assembles on each DNA strand where it exits the tetramer. Each RuvB hexamer is contacted by two RuvA subunits (via domain III) on 2 adjacent RuvB subunits; this complex drives branch migration. In the full resolvosome a probable DNA-RuvA(4)-RuvB(12)-RuvC(2) complex forms which resolves the HJ.

The protein localises to the cytoplasm. It catalyses the reaction ATP + H2O = ADP + phosphate + H(+). Functionally, the RuvA-RuvB-RuvC complex processes Holliday junction (HJ) DNA during genetic recombination and DNA repair, while the RuvA-RuvB complex plays an important role in the rescue of blocked DNA replication forks via replication fork reversal (RFR). RuvA specifically binds to HJ cruciform DNA, conferring on it an open structure. The RuvB hexamer acts as an ATP-dependent pump, pulling dsDNA into and through the RuvAB complex. RuvB forms 2 homohexamers on either side of HJ DNA bound by 1 or 2 RuvA tetramers; 4 subunits per hexamer contact DNA at a time. Coordinated motions by a converter formed by DNA-disengaged RuvB subunits stimulates ATP hydrolysis and nucleotide exchange. Immobilization of the converter enables RuvB to convert the ATP-contained energy into a lever motion, pulling 2 nucleotides of DNA out of the RuvA tetramer per ATP hydrolyzed, thus driving DNA branch migration. The RuvB motors rotate together with the DNA substrate, which together with the progressing nucleotide cycle form the mechanistic basis for DNA recombination by continuous HJ branch migration. Branch migration allows RuvC to scan DNA until it finds its consensus sequence, where it cleaves and resolves cruciform DNA. This Campylobacter jejuni subsp. doylei (strain ATCC BAA-1458 / RM4099 / 269.97) protein is Holliday junction branch migration complex subunit RuvB.